The chain runs to 239 residues: Purine nucleoside phosphorylase DeoD-type (239 aa).

Residue His-5 participates in a purine D-ribonucleoside binding. Phosphate-binding positions include Gly-21, Arg-25, Arg-44, and Arg-88–Ser-91. Residues Glu-180–Glu-182 and Ser-204–Asp-205 contribute to the a purine D-ribonucleoside site. The active-site Proton donor is Asp-205.

The protein belongs to the PNP/UDP phosphorylase family. Homohexamer; trimer of homodimers.

The enzyme catalyses a purine D-ribonucleoside + phosphate = a purine nucleobase + alpha-D-ribose 1-phosphate. It catalyses the reaction a purine 2'-deoxy-D-ribonucleoside + phosphate = a purine nucleobase + 2-deoxy-alpha-D-ribose 1-phosphate. Functionally, catalyzes the reversible phosphorolytic breakdown of the N-glycosidic bond in the beta-(deoxy)ribonucleoside molecules, with the formation of the corresponding free purine bases and pentose-1-phosphate. This Cronobacter sakazakii (strain ATCC BAA-894) (Enterobacter sakazakii) protein is Purine nucleoside phosphorylase DeoD-type.